The primary structure comprises 219 residues: Lipid A acyltransferase PagP (219 aa).

The signal sequence occupies residues 1 to 28 (MRLILISHSRLFALSALFLIPTFDSLSA). Residues 39-63 (IDRTTQSDSTTQRDSKTRRDPAPSF) are disordered. The segment covering 49-59 (TQRDSKTRRDP) has biased composition (basic and acidic residues). Residues His91, Asp134, and Ser135 contribute to the active site.

It belongs to the lipid A palmitoyltransferase family. As to quaternary structure, homodimer.

It localises to the cell outer membrane. The catalysed reaction is a lipid A + a 1,2-diacyl-sn-glycero-3-phosphocholine = a hepta-acyl lipid A + a 2-acyl-sn-glycero-3-phosphocholine. It catalyses the reaction a lipid IVA + a 1,2-diacyl-sn-glycero-3-phosphocholine = a lipid IVB + a 2-acyl-sn-glycero-3-phosphocholine. The enzyme catalyses a lipid IIA + a 1,2-diacyl-sn-glycero-3-phosphocholine = a lipid IIB + a 2-acyl-sn-glycero-3-phosphocholine. Its function is as follows. Transfers a fatty acid residue from the sn-1 position of a phospholipid to the N-linked hydroxyfatty acid chain on the proximal unit of lipid A or its precursors. This Dickeya zeae (strain Ech586) (Dickeya dadantii (strain Ech586)) protein is Lipid A acyltransferase PagP.